Consider the following 1905-residue polypeptide: von Willebrand factor A domain-containing protein 8 (1905 aa).

The N-terminal 45 residues, 1–45 (MQSRLLLLGAPGGLGDVASRRVRLLLRQVLRGRPGGDQQRLEVRL), are a transit peptide targeting the mitochondrion. Residues 1 to 260 (MQSRLLLLGA…PLDPPLRSRF (260 aa)) form an interaction with PEX7 region. ATP is bound at residue 446-453 (GGKGCGKT). Basic and acidic residues predominate over residues 1541 to 1560 (ERDSNEDVSDPKHGKEDPDN). Residues 1541-1583 (ERDSNEDVSDPKHGKEDPDNMPHVGGNTWAGGTGGRDTAGLGG) form a disordered region. Over residues 1568–1583 (TWAGGTGGRDTAGLGG) the composition is skewed to gly residues. The 183-residue stretch at 1714–1896 (RLRLVVDVSG…KKIPQILQQI (183 aa)) folds into the VWFA domain.

In terms of assembly, monomer. Interacts with PEX7. Interacts with PEX5 in a PEX7-dependent manner. Isoform 1 is predominantly expressed in liver, kidney, pancreas, heart, and skeletal muscle (at protein level).

The protein localises to the mitochondrion. In terms of biological role, exhibits ATPase activity in vitro. This chain is von Willebrand factor A domain-containing protein 8 (Vwa8), found in Mus musculus (Mouse).